The sequence spans 320 residues: Dual oxidase maturation factor 2 (320 aa).

Residues M1–S21 are Extracellular-facing. The chain crosses the membrane as a helical span at residues V22 to L42. Over P43–R56 the chain is Cytoplasmic. Residues V57 to F77 traverse the membrane as a helical segment. At V78–T183 the chain is on the extracellular side. N-linked (GlcNAc...) asparagine glycans are attached at residues N84, N109, and N121. Residues L184–L204 form a helical membrane-spanning segment. The Cytoplasmic portion of the chain corresponds to Y205 to G206. The chain crosses the membrane as a helical span at residues G207–I227. Topologically, residues S228–G247 are extracellular. The chain crosses the membrane as a helical span at residues A248–V268. Topologically, residues S269–L320 are cytoplasmic.

This sequence belongs to the DUOXA family. As to quaternary structure, heterodimer with DUXA2; disulfide-linked. Interacts with CSNK1G2. N-glycosylated. In terms of tissue distribution, specifically expressed in thyroid. Also detected in salivary glands.

The protein localises to the endoplasmic reticulum membrane. Required for the maturation and the transport from the endoplasmic reticulum to the plasma membrane of functional DUOX2. May play a role in thyroid hormone synthesis. This Homo sapiens (Human) protein is Dual oxidase maturation factor 2 (DUOXA2).